The following is a 340-amino-acid chain: Zinc finger protein 367 (340 aa).

The tract at residues 101-140 (GAPQSSASVAAVSGGEDEEEASSPDSGHLKDGIRRGRPRA) is disordered. Residues 127 to 140 (GHLKDGIRRGRPRA) show a composition bias toward basic and acidic residues. 2 C2H2-type zinc fingers span residues 157-179 (IRCN…KRTH) and 185-209 (YLCD…QRLH). The segment at 280 to 317 (KGKLVQKADQEQQDPLEYLQSDEEDDEKSGAQRRLQEQ) is disordered. Residues 299-332 (QSDEEDDEKSGAQRRLQEQRERLHGALALIELAN) are a coiled coil. Residue S300 is modified to Phosphoserine. Residues 307 to 317 (KSGAQRRLQEQ) are compositionally biased toward basic and acidic residues.

The protein belongs to the krueppel C2H2-type zinc-finger protein family. Expressed in bone marrow and ovary.

The protein resides in the nucleus. Its function is as follows. Transcriptional activator. Isoform 1 may be involved in transcriptional activation of erythroid genes. The protein is Zinc finger protein 367 (Znf367) of Mus musculus (Mouse).